The chain runs to 231 residues: Ribosomal RNA large subunit methyltransferase E (231 aa).

Glycine 76, tryptophan 78, aspartate 99, aspartate 115, and aspartate 139 together coordinate S-adenosyl-L-methionine. Lysine 179 serves as the catalytic Proton acceptor.

It belongs to the class I-like SAM-binding methyltransferase superfamily. RNA methyltransferase RlmE family.

The protein resides in the cytoplasm. The enzyme catalyses uridine(2552) in 23S rRNA + S-adenosyl-L-methionine = 2'-O-methyluridine(2552) in 23S rRNA + S-adenosyl-L-homocysteine + H(+). Specifically methylates the uridine in position 2552 of 23S rRNA at the 2'-O position of the ribose in the fully assembled 50S ribosomal subunit. The polypeptide is Ribosomal RNA large subunit methyltransferase E (Bradyrhizobium sp. (strain ORS 278)).